Consider the following 552-residue polypeptide: Leucine-rich repeat-containing protein 31 (552 aa).

A disordered region spans residues 1-65; that stretch reads MSQTRKKTSS…SETAKPLSSE (65 aa). The segment covering 31-41 has biased composition (basic and acidic residues); that stretch reads ESRKEDNDLKT. Positions 42-58 are enriched in polar residues; it reads SDSQPSDWIQKTATSET. LRR repeat units lie at residues 227–246, 255–275, 283–293, 311–331, 339–360, 367–387, 395–415, 423–443, and 453–475; these read SLEV…LNSI, NLKV…KILD, ELRKLDLSCNK, HLQV…MSLT, NLQE…NLLS, ALKS…TALA, ALEV…KLLL, SLQV…ALLA, and KLQK…MFCQ.

The protein is Leucine-rich repeat-containing protein 31 (LRRC31) of Homo sapiens (Human).